Here is a 182-residue protein sequence, read N- to C-terminus: Probable inosine/xanthosine triphosphatase (182 aa).

Glu-65 provides a ligand contact to Mg(2+). 65-66 (EA) contacts substrate.

The protein belongs to the YjjX NTPase family. As to quaternary structure, homodimer. Mg(2+) is required as a cofactor. Mn(2+) serves as cofactor.

It catalyses the reaction XTP + H2O = XDP + phosphate + H(+). It carries out the reaction ITP + H2O = IDP + phosphate + H(+). In terms of biological role, phosphatase that hydrolyzes non-canonical purine nucleotides such as XTP and ITP to their respective diphosphate derivatives. Probably excludes non-canonical purines from DNA/RNA precursor pool, thus preventing their incorporation into DNA/RNA and avoiding chromosomal lesions. This is Probable inosine/xanthosine triphosphatase from Pyrobaculum neutrophilum (strain DSM 2338 / JCM 9278 / NBRC 100436 / V24Sta) (Thermoproteus neutrophilus).